The chain runs to 523 residues: Glutamate--cysteine ligase (523 aa).

This sequence belongs to the glutamate--cysteine ligase type 1 family. Type 1 subfamily.

The catalysed reaction is L-cysteine + L-glutamate + ATP = gamma-L-glutamyl-L-cysteine + ADP + phosphate + H(+). It participates in sulfur metabolism; glutathione biosynthesis; glutathione from L-cysteine and L-glutamate: step 1/2. The polypeptide is Glutamate--cysteine ligase (Baumannia cicadellinicola subsp. Homalodisca coagulata).